The following is a 273-amino-acid chain: Phosphate import ATP-binding protein PstB (273 aa).

The ABC transporter domain maps to 26-268; sequence MRGEKVCVFY…PTEKRTQDYI (243 aa). 58–65 contacts ATP; it reads GPSGCGKS.

Belongs to the ABC transporter superfamily. Phosphate importer (TC 3.A.1.7) family. The complex is composed of two ATP-binding proteins (PstB), two transmembrane proteins (PstC and PstA) and a solute-binding protein (PstS).

It localises to the cell inner membrane. It catalyses the reaction phosphate(out) + ATP + H2O = ADP + 2 phosphate(in) + H(+). Its function is as follows. Part of the ABC transporter complex PstSACB involved in phosphate import. Responsible for energy coupling to the transport system. This chain is Phosphate import ATP-binding protein PstB, found in Brucella abortus (strain 2308).